A 107-amino-acid chain; its full sequence is Biphenyl 2,3-dioxygenase, ferredoxin component (107 aa).

A Rieske domain is found at 4–99 (TKICSSGDLA…VKLEGDDVLV (96 aa)). 4 residues coordinate [2Fe-2S] cluster: C43, H45, C62, and H65.

It belongs to the bacterial ring-hydroxylating dioxygenase ferredoxin component family. In terms of assembly, the multicomponent biphenyl dioxygenase system is composed of a ferredoxin reductase (BphA4), a ferredoxin (BphA3), and a terminal oxygenase (BphA1A2). The cofactor is [2Fe-2S] cluster.

The protein operates within xenobiotic degradation; biphenyl degradation. Its function is as follows. Ferredoxin component of the biphenyl dioxygenase system that catalyzes the stereospecific dihydroxylation of the aromatic ring of biphenyl, yielding a dihydrodiol compound. Is likely involved in biphenyl degradation that allows growth of Rhodococcus sp. strain RHA1 on biphenyl as the sole source of carbon and energy. The dioxygenase system can also use naphtalene and 4-chlorobiphenyl (4-CB) as substrates, as well as some polychlorinated biphenyls (PCB) such as 2,2'-dichlorobiphenyl, 2,3-dichlorobiphenyl and 2,5,2'-trichlorobiphenyl. It exhibits weak activity toward dibenzofuran and dibenzo-p-dioxin. Electrons are transferred from NADH to the [2Fe-2S] cluster in BphA1 via FAD of BphA4 and [2Fe-2S] cluster of BphA3. The sequence is that of Biphenyl 2,3-dioxygenase, ferredoxin component from Rhodococcus jostii (strain RHA1).